The sequence spans 79 residues: Reactive oxygen species modulator 1 (79 aa).

Residues 23–43 traverse the membrane as a helical segment; it reads FMMGFAVGMAAGALFGTFSCL. The segment at 42–60 is sufficient for antibacterial activity; that stretch reads CLRFGMRGRELMGGVGKTM.

Belongs to the MGR2 family.

The protein localises to the mitochondrion inner membrane. In terms of biological role, has antibacterial activity against a variety of bacteria including S.aureus, P.aeruginosa and M.tuberculosis. Acts by inducing bacterial membrane breakage. Its function is as follows. Induces production of reactive oxygen species (ROS) which are necessary for cell proliferation. May play a role in inducing oxidative DNA damage and replicative senescence. May play a role in the coordination of mitochondrial morphology and cell proliferation. This is Reactive oxygen species modulator 1 (romo1) from Xenopus tropicalis (Western clawed frog).